The primary structure comprises 183 residues: Capsid protein (183 aa).

Residues 136 to 183 form a disordered region; it reads NAPILSTLPETTVVRRRGRSPRRRTPSPRRRRSQSPRRRRSKSRESQC. The segment covering 149–177 has biased composition (basic residues); it reads VRRRGRSPRRRTPSPRRRRSQSPRRRRSK. A phosphoserine; by host mark is found at Ser155, Ser162, and Ser170. One copy of the 1; half-length repeat lies at 155-160; it reads SPRRRT. Residues 155–176 form a 3 X 7 AA repeats of S-P-R-R-R-[PR]-S region; that stretch reads SPRRRTPSPRRRRSQSPRRRRS. The Bipartite nuclear localization signal motif lies at 158 to 175; the sequence is RRTPSPRRRRSQSPRRRR. 2 consecutive repeat copies span residues 162–168 and 170–176. An RNA binding region spans residues 177–183; it reads KSRESQC.

The protein belongs to the orthohepadnavirus core antigen family. Homodimerizes, then multimerizes. Interacts with cytosol exposed regions of viral L glycoprotein present in the reticulum-to-Golgi compartment. Interacts with human FLNB. Phosphorylated form interacts with host importin alpha; this interaction depends on the exposure of the NLS, which itself depends upon genome maturation and/or phosphorylation of the capsid protein. Interacts with host NUP153. Post-translationally, phosphorylated by host SRPK1, SRPK2, and maybe protein kinase C or GAPDH. Phosphorylation is critical for pregenomic RNA packaging. Protein kinase C phosphorylation is stimulated by HBx protein and may play a role in transport of the viral genome to the nucleus at the late step during the viral replication cycle.

The protein resides in the virion. The protein localises to the host cytoplasm. Self assembles to form an icosahedral capsid. Most capsids appear to be large particles with an icosahedral symmetry of T=4 and consist of 240 copies of capsid protein, though a fraction forms smaller T=3 particles consisting of 180 capsid proteins. Entering capsids are transported along microtubules to the nucleus. Phosphorylation of the capsid is thought to induce exposure of nuclear localization signal in the C-terminal portion of the capsid protein that allows binding to the nuclear pore complex via the importin (karyopherin-) alpha and beta. Capsids are imported in intact form through the nuclear pore into the nuclear basket, where it probably binds NUP153. Only capsids that contain the mature viral genome can release the viral DNA and capsid protein into the nucleoplasm. Immature capsids get stuck in the basket. Capsids encapsulate the pre-genomic RNA and the P protein. Pre-genomic RNA is reverse-transcribed into DNA while the capsid is still in the cytoplasm. The capsid can then either be directed to the nucleus, providing more genomes for transcription, or bud through the endoplasmic reticulum to provide new virions. The chain is Capsid protein from Hepatitis B virus genotype C subtype ar (isolate Japan/S-207/1988) (HBV-C).